A 223-amino-acid chain; its full sequence is NLP effector protein 2 (223 aa).

Positions 90-100 match the Conserved undecapeptide motif motif; the sequence is AIMYSWYFPKD. The short motif at 107–113 is the Conserved p motif element; the sequence is GHRHDWE.

The protein belongs to the Necrosis inducing protein (NPP1) family.

It is found in the secreted. The protein localises to the host cytoplasm. Probable secreted effector that may act as a pathogen-associated molecular pattern (PAMP) recognized by the plant immune system. Seems not to induce necrosis, neither in several susceptible or resistant Vitis species nor in the dicot model plant Nicotiana benthamiana. The polypeptide is NLP effector protein 2 (Plasmopara viticola (Downy mildew of grapevine)).